Reading from the N-terminus, the 820-residue chain is Disintegrin and metalloproteinase domain-containing protein 29 (820 aa).

A signal peptide spans 1-18 (MKMLLLLHCLGVFLSCSG). The propeptide occupies 19–193 (HIQDEHPQYH…TQKQSSYVGW (175 aa)). Over 194–674 (WIHFRIVEIV…GPPPKRKKKK (481 aa)) the chain is Extracellular. The 193-residue stretch at 198-390 (RIVEIVVVID…RTKCLLETVH (193 aa)) folds into the Peptidase M12B domain. Residues Asn217 and Asn320 are each glycosylated (N-linked (GlcNAc...) asparagine). Disulfide bonds link Cys307–Cys384, Cys347–Cys369, and Cys349–Cys354. Residues Asn368, Asn428, Asn469, Asn538, Asn545, Asn558, and Asn564 are each glycosylated (N-linked (GlcNAc...) asparagine). Residues 397-483 (VKRCGNGVVE…KCPDDFYVED (87 aa)) form the Disintegrin domain. Cys455 and Cys475 form a disulfide bridge. Disulfide bonds link Cys625-Cys636, Cys630-Cys642, and Cys644-Cys653. The EGF-like domain occupies 625-654 (CSPAFCNKRGICNNKHHCHCNYLWDPPNCL). Residues 675–695 (KFCYLCILLLIVLFILLCCLY) form a helical membrane-spanning segment. Residues 696–820 (RLCKKSKPIK…SQSQPPVTPS (125 aa)) are Cytoplasmic-facing. A disordered region spans residues 706-820 (KQQDVQTPSA…SQSQPPVTPS (115 aa)). The segment covering 715-727 (AKEEEKIQRRPHE) has biased composition (basic and acidic residues). Residues 738-820 (PSQSQPPVTP…SQSQPPVTPS (83 aa)) are compositionally biased toward low complexity. A run of 9 repeats spans residues 739-747 (SQSQPPVTP), 748-756 (SQSHPQVMP), 757-765 (SQSQPPVTP), 766-774 (SQSQPRVMP), 775-783 (SQSQPPVMP), 784-792 (SQSHPQLTP), 793-801 (SQSQPPVTP), 802-810 (SQRQPQLMP), and 811-819 (SQSQPPVTP). The interval 739 to 819 (SQSQPPVTPS…PSQSQPPVTP (81 aa)) is 9 X 9 AA approximate repeats.

In terms of tissue distribution, expressed specifically in testes.

The protein resides in the membrane. Its function is as follows. May be involved in spermatogenesis and fertilization. Seems to be a non catalytic metalloprotease-like protein. The chain is Disintegrin and metalloproteinase domain-containing protein 29 (ADAM29) from Homo sapiens (Human).